The sequence spans 155 residues: Transcription antitermination protein NusB (155 aa).

It belongs to the NusB family.

Its function is as follows. Involved in transcription antitermination. Required for transcription of ribosomal RNA (rRNA) genes. Binds specifically to the boxA antiterminator sequence of the ribosomal RNA (rrn) operons. The protein is Transcription antitermination protein NusB of Mesorhizobium japonicum (strain LMG 29417 / CECT 9101 / MAFF 303099) (Mesorhizobium loti (strain MAFF 303099)).